The sequence spans 251 residues: MKIFYKAINMTLSMFTVIPLPKYEWDDRAAKHIMKLYPFIGLIIGILWYLSFFVLSKLNVPIMLMAALILTVPYILTGFLHLDGFMDVSDALLSRRDKETKLRILKDSTVGAFSVISVVLLLLVEFAGIFTVLNKNLDMRILIFIPIASRTMNGYFIVSQEMLGQSSLAKFFKEGTGKVDEIILLGIYVLVALITFFTLGINYLIAILAMGLISFILLLKVKKELGGINGDVAGYILVLMEFTGILLLGII.

6 helical membrane passes run 36–56 (LYPF…FVLS), 60–80 (VPIM…TGFL), 110–130 (VGAF…AGIF), 181–201 (EIIL…TLGI), 202–222 (NYLI…LKVK), and 231–251 (DVAG…LGII).

Belongs to the CobS family. It depends on Mg(2+) as a cofactor.

It localises to the cell membrane. The enzyme catalyses alpha-ribazole + adenosylcob(III)inamide-GDP = adenosylcob(III)alamin + GMP + H(+). The catalysed reaction is alpha-ribazole 5'-phosphate + adenosylcob(III)inamide-GDP = adenosylcob(III)alamin 5'-phosphate + GMP + H(+). The protein operates within cofactor biosynthesis; adenosylcobalamin biosynthesis; adenosylcobalamin from cob(II)yrinate a,c-diamide: step 7/7. Joins adenosylcobinamide-GDP and alpha-ribazole to generate adenosylcobalamin (Ado-cobalamin). Also synthesizes adenosylcobalamin 5'-phosphate from adenosylcobinamide-GDP and alpha-ribazole 5'-phosphate. The protein is Adenosylcobinamide-GDP ribazoletransferase of Clostridium perfringens (strain SM101 / Type A).